Consider the following 603-residue polypeptide: uncharacterized protein (603 aa).

The Ubiquitin-like domain occupies Tyr-4–Phe-79. Disordered stretches follow at residues Thr-85–Leu-121, Ser-159–Ser-178, and Ala-206–Phe-348. Polar residues-rich tracts occupy residues Val-94–Asn-117 and Thr-162–Ser-178. Positions Ser-219 to Pro-231 are enriched in low complexity. Residues Leu-246 to Leu-264 are compositionally biased toward polar residues. Positions Ser-280–Ser-289 are enriched in low complexity. Positions Ile-290 to Gly-314 are enriched in polar residues. The segment covering Pro-315–Pro-329 has biased composition (low complexity). The span at Ala-330–Phe-348 shows a compositional bias: polar residues. A helical transmembrane segment spans residues Ile-496–Phe-516. The tract at residues Thr-544–Leu-578 is disordered. Thr-566 carries the phosphothreonine modification. Basic and acidic residues predominate over residues Asn-569–Leu-578.

Its subcellular location is the endoplasmic reticulum membrane. This is an uncharacterized protein from Schizosaccharomyces pombe (strain 972 / ATCC 24843) (Fission yeast).